We begin with the raw amino-acid sequence, 332 residues long: Adenosine deaminase (332 aa).

Zn(2+)-binding residues include His12 and His14. Substrate contacts are provided by His14, Asp16, and Gly169. Residue His196 participates in Zn(2+) binding. Glu199 acts as the Proton donor in catalysis. Asp277 is a binding site for Zn(2+).

The protein belongs to the metallo-dependent hydrolases superfamily. Adenosine and AMP deaminases family. Adenosine deaminase subfamily. Requires Zn(2+) as cofactor.

It carries out the reaction adenosine + H2O + H(+) = inosine + NH4(+). The catalysed reaction is 2'-deoxyadenosine + H2O + H(+) = 2'-deoxyinosine + NH4(+). Its function is as follows. Catalyzes the hydrolytic deamination of adenosine and 2-deoxyadenosine. This is Adenosine deaminase from Vibrio atlanticus (strain LGP32) (Vibrio splendidus (strain Mel32)).